The following is an 83-amino-acid chain: RNA-binding protein Hfq (83 aa).

In terms of domain architecture, Sm spans 10–70; the sequence is DAFLNQLRKE…ISTVSPSRPV (61 aa).

The protein belongs to the Hfq family. Homohexamer.

Its function is as follows. RNA chaperone that binds small regulatory RNA (sRNAs) and mRNAs to facilitate mRNA translational regulation in response to envelope stress, environmental stress and changes in metabolite concentrations. Also binds with high specificity to tRNAs. The sequence is that of RNA-binding protein Hfq from Desulforudis audaxviator (strain MP104C).